Reading from the N-terminus, the 406-residue chain is Arginine deiminase (406 aa).

Cys396 (amidino-cysteine intermediate) is an active-site residue.

Belongs to the arginine deiminase family.

Its subcellular location is the cytoplasm. The enzyme catalyses L-arginine + H2O = L-citrulline + NH4(+). It participates in amino-acid degradation; L-arginine degradation via ADI pathway; carbamoyl phosphate from L-arginine: step 1/2. This chain is Arginine deiminase, found in Aliivibrio fischeri (strain ATCC 700601 / ES114) (Vibrio fischeri).